The chain runs to 317 residues: MLLKRLCFAALFSLSMVGCTNAPNALAVNTTQKIIQYERNKSDLEIKSLTLASGDKMVYAENGNVAGEPLLLIHGFGGNKDNFTRIARQLEGYHLIIPDLLGFGESSKPMSADYRSEAQRTRLHELLQAKGLASNIHVGGNSMGGAISVAYAAKYPKDVKSLWLVDSAGFWSAGIPKSLEGATLENNPLLIKSNEDFYKMYDFVMYKPPYLPKSVKAVFAQERIKNKELDAKILEQIVTDNVEERAKIIAQYKIPTLVVWGDKDQIIKPETVNLIKKIIPQAQVIMMEDVGHVPMVEALDETADNYKAFRSILEAQR.

The signal sequence occupies residues 1–18; that stretch reads MLLKRLCFAALFSLSMVG. The N-palmitoyl cysteine moiety is linked to residue Cys19. Cys19 carries the S-diacylglycerol cysteine lipid modification. The AB hydrolase-1 domain maps to 69–296; that stretch reads PLLLIHGFGG…MEDVGHVPMV (228 aa). His74 is a catalytic residue. The Nucleophile role is filled by Ser142. Catalysis depends on charge relay system residues Glu270 and His292.

It is found in the cell outer membrane. The catalysed reaction is a triacylglycerol + H2O = a diacylglycerol + a fatty acid + H(+). The polypeptide is Lipase 1 (lip1) (Psychrobacter immobilis).